The sequence spans 364 residues: Fructose-bisphosphate aldolase A (364 aa).

At Thr-9 the chain carries Phosphothreonine. Phosphoserine occurs at positions 36 and 39. N6-acetyllysine; alternate is present on Lys-42. Residue Lys-42 forms a Glycyl lysine isopeptide (Lys-Gly) (interchain with G-Cter in SUMO1); alternate linkage. Lys-42 is covalently cross-linked (Glycyl lysine isopeptide (Lys-Gly) (interchain with G-Cter in SUMO2); alternate). Arg-43 provides a ligand contact to beta-D-fructose 1,6-bisphosphate. At Ser-46 the chain carries Phosphoserine. Lys-99 carries the N6-(2-hydroxyisobutyryl)lysine modification. Position 108 is an N6-acetyllysine (Lys-108). At Lys-111 the chain carries N6-acetyllysine; alternate. At Lys-111 the chain carries N6-malonyllysine; alternate. A Phosphoserine modification is found at Ser-132. Lys-147 is subject to N6-(2-hydroxyisobutyryl)lysine. Glu-188 (proton acceptor) is an active-site residue. Lys-230 serves as the catalytic Schiff-base intermediate with dihydroxyacetone-P. Position 272 is a phosphoserine (Ser-272). Beta-D-fructose 1,6-bisphosphate-binding positions include 272-274, Ser-301, and Arg-304; that span reads SGG. At Lys-312 the chain carries N6-malonyllysine. An N6-acetyllysine modification is found at Lys-330. The residue at position 361 (Asn-361) is a Deamidated asparagine; in form beta.

It belongs to the class I fructose-bisphosphate aldolase family. In terms of assembly, homotetramer. Interacts with SNX9 and WAS. Interacts with FBP2; the interaction blocks FBP2 inhibition by physiological concentrations of AMP and reduces inhibition by Ca(2+). Asn-361 in form alpha is deaminated to Asp in form beta.

The protein resides in the cytoplasm. The protein localises to the myofibril. It is found in the sarcomere. Its subcellular location is the i band. It localises to the m line. It catalyses the reaction beta-D-fructose 1,6-bisphosphate = D-glyceraldehyde 3-phosphate + dihydroxyacetone phosphate. Its pathway is carbohydrate degradation; glycolysis; D-glyceraldehyde 3-phosphate and glycerone phosphate from D-glucose: step 4/4. Functionally, plays a key role in glycolysis and gluconeogenesis. In addition, may also function as scaffolding protein. In Oryctolagus cuniculus (Rabbit), this protein is Fructose-bisphosphate aldolase A (ALDOA).